Reading from the N-terminus, the 181-residue chain is Large ribosomal subunit protein uL16 (181 aa).

The protein belongs to the universal ribosomal protein uL16 family.

The sequence is that of Large ribosomal subunit protein uL16 from Pyrococcus horikoshii (strain ATCC 700860 / DSM 12428 / JCM 9974 / NBRC 100139 / OT-3).